Consider the following 346-residue polypeptide: Uroporphyrinogen decarboxylase (346 aa).

Residues 23–27, D73, Y151, S206, and H321 contribute to the substrate site; that span reads RQAGR.

Belongs to the uroporphyrinogen decarboxylase family. As to quaternary structure, homodimer.

The protein resides in the cytoplasm. It carries out the reaction uroporphyrinogen III + 4 H(+) = coproporphyrinogen III + 4 CO2. The protein operates within porphyrin-containing compound metabolism; protoporphyrin-IX biosynthesis; coproporphyrinogen-III from 5-aminolevulinate: step 4/4. Catalyzes the decarboxylation of four acetate groups of uroporphyrinogen-III to yield coproporphyrinogen-III. The sequence is that of Uroporphyrinogen decarboxylase from Sulfurovum sp. (strain NBC37-1).